The following is a 305-amino-acid chain: Tyrosine recombinase XerC (305 aa).

A Core-binding (CB) domain is found at 4–95 (TSIQALINKW…AVKNFYRFLE (92 aa)). A Tyr recombinase domain is found at 116 to 298 (LLPKALSEDD…SIKHLEAVYT (183 aa)). Active-site residues include Arg-159, Lys-182, His-250, Arg-253, and His-276. Catalysis depends on Tyr-285, which acts as the O-(3'-phospho-DNA)-tyrosine intermediate.

Belongs to the 'phage' integrase family. XerC subfamily. As to quaternary structure, forms a cyclic heterotetrameric complex composed of two molecules of XerC and two molecules of XerD.

It is found in the cytoplasm. Functionally, site-specific tyrosine recombinase, which acts by catalyzing the cutting and rejoining of the recombining DNA molecules. The XerC-XerD complex is essential to convert dimers of the bacterial chromosome into monomers to permit their segregation at cell division. It also contributes to the segregational stability of plasmids. This chain is Tyrosine recombinase XerC, found in Rickettsia rickettsii (strain Iowa).